A 251-amino-acid polypeptide reads, in one-letter code: MSFTVVIPARYSSSRLPGKPLADIGGKPMVQWVYEQAMQAGADDVIIATDDERVSAAVEQFGGKVCMTSPNHESGTERLAEVVEKMAIPADHIIVNVQGDEPLVPPVIIRQVADNLAASDAPMATLAVEIESEDEVFNPNAVKVVADERGYAMYFSRATIPWDRDNFAKQDKAIVNPLMRHIGIYAYRAGFINTYVNWAPSALEQIECLEQLRVLWYGEKIHVAVAKEAPAAGVDTPEDLEAVRAIVAKKA.

This sequence belongs to the KdsB family.

It is found in the cytoplasm. The enzyme catalyses 3-deoxy-alpha-D-manno-oct-2-ulosonate + CTP = CMP-3-deoxy-beta-D-manno-octulosonate + diphosphate. Its pathway is nucleotide-sugar biosynthesis; CMP-3-deoxy-D-manno-octulosonate biosynthesis; CMP-3-deoxy-D-manno-octulosonate from 3-deoxy-D-manno-octulosonate and CTP: step 1/1. The protein operates within bacterial outer membrane biogenesis; lipopolysaccharide biosynthesis. Functionally, activates KDO (a required 8-carbon sugar) for incorporation into bacterial lipopolysaccharide in Gram-negative bacteria. This is 3-deoxy-manno-octulosonate cytidylyltransferase from Vibrio parahaemolyticus serotype O3:K6 (strain RIMD 2210633).